Consider the following 241-residue polypeptide: Probable pectate lyase D (241 aa).

The signal sequence occupies residues 1-17; sequence MYQKSLLFSLLATSALA. An N-linked (GlcNAc...) asparagine glycan is attached at N215. The tract at residues 215 to 241 is disordered; the sequence is NNSGDEPEEVSEGPSDACQYSEPLSSC.

This sequence belongs to the polysaccharide lyase 3 family. Ca(2+) serves as cofactor.

It is found in the secreted. It catalyses the reaction Eliminative cleavage of (1-&gt;4)-alpha-D-galacturonan to give oligosaccharides with 4-deoxy-alpha-D-galact-4-enuronosyl groups at their non-reducing ends.. Its function is as follows. Pectinolytic enzyme consist of four classes of enzymes: pectin lyase, polygalacturonase, pectin methylesterase and rhamnogalacturonase. Among pectinolytic enzymes, pectin lyase is the most important in depolymerization of pectin, since it cleaves internal glycosidic bonds of highly methylated pectins. Favors pectate, the anion, over pectin, the methyl ester. In Neosartorya fischeri (strain ATCC 1020 / DSM 3700 / CBS 544.65 / FGSC A1164 / JCM 1740 / NRRL 181 / WB 181) (Aspergillus fischerianus), this protein is Probable pectate lyase D (plyD).